A 1461-amino-acid chain; its full sequence is Phospholipid-transporting ATPase VB (1461 aa).

Residues 1 to 82 (MALSVDSSWH…TTKYTLFTFL (82 aa)) lie on the Cytoplasmic side of the membrane. The helical transmembrane segment at 83 to 104 (PRNLFEQFHRWANLYFLFLVIL) threads the bilayer. Topologically, residues 105–110 (NWMPSM) are exoplasmic loop. A helical transmembrane segment spans residues 111-132 (EVFHREITMLPLAIVLFVIMIK). At 133 to 316 (DGMEDFKRHR…SKIERRMNID (184 aa)) the chain is on the cytoplasmic side. The chain crosses the membrane as a helical span at residues 317 to 338 (IFFCIGILILMCLIGAVGHSIW). Residues 339–368 (NGTFEEHPPFDVPDANGSFLPSALGGFYMF) lie on the Exoplasmic loop side of the membrane. Residues 369–390 (LTMIILLQVLIPISLYVSIELV) form a helical membrane-spanning segment. Residues 391–1111 (KLGQVFFLSN…GHWCYSRLAR (721 aa)) lie on the Cytoplasmic side of the membrane. D433 serves as the catalytic 4-aspartylphosphate intermediate. The ATP site is built by D433, K434, and T435. D433 provides a ligand contact to Mg(2+). T435 provides a ligand contact to Mg(2+). Composition is skewed to polar residues over residues 496–511 (MRSQKGAQPLRRSQSA) and 530–539 (SQPPVAFSSS). Disordered regions lie at residues 496-541 (MRSQ…SSIE) and 640-687 (TAPS…MWDQ). Residues E724, F766, K790, R835, T915, G916, D917, R1029, and K1035 each contribute to the ATP site. D1055 is a Mg(2+) binding site. ATP is bound by residues N1058 and D1059. D1059 contributes to the Mg(2+) binding site. The chain crosses the membrane as a helical span at residues 1112–1132 (MVVYYLYKNVCYVNLLFWYQF). Residues 1133–1144 (FCGFSSSTMIDY) lie on the Exoplasmic loop side of the membrane. Residues 1145-1164 (WQMIFFNLFFTSLPPLVFGV) form a helical membrane-spanning segment. Residues 1165–1194 (LDKDISAETLLALPELYKSGQNSECYNLST) are Cytoplasmic-facing. Residues 1195–1216 (FWISMVDAFYQSLICFFIPYLA) form a helical membrane-spanning segment. The Exoplasmic loop segment spans residues 1217-1223 (YKGSDID). Residues 1224–1246 (VFTFGTPINTISLTTILLHQAME) form a helical membrane-spanning segment. Residues 1247-1252 (MKTWTI) are Cytoplasmic-facing. A helical membrane pass occupies residues 1253–1273 (FHGVVLLGSFLMYFLVSLLYN). Residues 1274 to 1291 (ATCVICNSPTNPYWVMEG) are Exoplasmic loop-facing. The helical transmembrane segment at 1292–1316 (QLSNPTFYLVCFLTPVVALLPRYFF) threads the bilayer. Residues 1317-1461 (LSLQGTCGKS…HRRSQSSLTI (145 aa)) are Cytoplasmic-facing. The segment at 1346–1397 (IQSWRSRQRPAPVPEVARPTHHPVSSITGQDFSASTPKSSNPPKRKHVEESV) is disordered. A compositionally biased stretch (polar residues) spans 1368–1387 (PVSSITGQDFSASTPKSSNP).

The protein belongs to the cation transport ATPase (P-type) (TC 3.A.3) family. Type IV subfamily. Component of a P4-ATPase flippase complex which consists of a catalytic alpha subunit ATP10B and an accessory beta subunit TMEM30A. Mg(2+) serves as cofactor. Autophosphorylated at the conserved aspartate of the P-type ATPase signature sequence. Expressed in predominantly in brain structures including medulla oblongata, substantia nigra and basal ganglia. Expressed in the gastrointestinal system with highest levels in the small intestine and colon. Also expressed at low levels in testis and thymus.

It is found in the late endosome membrane. The protein localises to the lysosome membrane. The protein resides in the endoplasmic reticulum membrane. The catalysed reaction is ATP + H2O + phospholipidSide 1 = ADP + phosphate + phospholipidSide 2.. The enzyme catalyses a beta-D-glucosyl-(1&lt;-&gt;1')-N-acylsphing-4-enine(out) + ATP + H2O = a beta-D-glucosyl-(1&lt;-&gt;1')-N-acylsphing-4-enine(in) + ADP + phosphate + H(+). Functionally, catalytic component of a P4-ATPase flippase complex, which catalyzes the hydrolysis of ATP coupled to the transport of glucosylceramide (GlcCer) from the outer to the inner leaflet of lysosome membranes. Plays an important role in the maintenance of lysosome membrane integrity and function in cortical neurons. This is Phospholipid-transporting ATPase VB from Homo sapiens (Human).